A 286-amino-acid chain; its full sequence is Pantothenate synthetase (286 aa).

31–38 (MGALHDGH) provides a ligand contact to ATP. Residue His-38 is the Proton donor of the active site. A (R)-pantoate-binding site is contributed by Gln-62. Gln-62 provides a ligand contact to beta-alanine. Residue 148-151 (GKKD) participates in ATP binding. Residue Gln-154 participates in (R)-pantoate binding. Residues Val-177 and 185 to 188 (KSSR) each bind ATP.

Belongs to the pantothenate synthetase family. Homodimer.

Its subcellular location is the cytoplasm. The catalysed reaction is (R)-pantoate + beta-alanine + ATP = (R)-pantothenate + AMP + diphosphate + H(+). The protein operates within cofactor biosynthesis; (R)-pantothenate biosynthesis; (R)-pantothenate from (R)-pantoate and beta-alanine: step 1/1. Functionally, catalyzes the condensation of pantoate with beta-alanine in an ATP-dependent reaction via a pantoyl-adenylate intermediate. The sequence is that of Pantothenate synthetase from Staphylococcus epidermidis (strain ATCC 35984 / DSM 28319 / BCRC 17069 / CCUG 31568 / BM 3577 / RP62A).